A 374-amino-acid polypeptide reads, in one-letter code: MIELNPVRQRITDLTDRVLSLRGYLDYDAKKERLEEVTRELESPDVWNNAEYAQNLGRERSSLEKTVGGIASVLDGLADATELLELAESEQDEDTALAVVADLDKHQAHVEKLEFQRMFSGEMDNAAAFVDIQAGAGGTEAQDWAEILLRMYLRWCESRGWKTELMEVSGGDVAGIKSATLRVEGDYAYGWLKTETGVHRLVRKSPFDSDNRRHTSFTSVFVSPEIDDNIDITINPADLRTDVYRSSGAGGQHVNKTESAVRITHIPTNIVVACQTGRSQHQNRDNAMKMLAAKLYELEIQKRNAEKDAVEATKSDIGWGSQIRNYVLDQSRIKDLRTGIERSDTQKVLDGDLDEFVEASLKAGLAVGSKRVDA.

Residue Gln-252 is modified to N5-methylglutamine.

It belongs to the prokaryotic/mitochondrial release factor family. Methylated by PrmC. Methylation increases the termination efficiency of RF2.

Its subcellular location is the cytoplasm. In terms of biological role, peptide chain release factor 2 directs the termination of translation in response to the peptide chain termination codons UGA and UAA. The polypeptide is Peptide chain release factor 2 (Stenotrophomonas maltophilia (strain R551-3)).